A 513-amino-acid chain; its full sequence is Zinc finger CCCH-type with G patch domain-containing protein (513 aa).

Residues 155-178 form a C3H1-type zinc finger; sequence PCSYYLEGECRFDEAKCRFSHGAL. A compositionally biased stretch (acidic residues) spans 252-261; that stretch reads DQDEDDELSS. Positions 252-283 are disordered; sequence DQDEDDELSSEESNSSMNDNSSDEAESDMDDL. Positions 262 to 271 are enriched in low complexity; sequence EESNSSMNDN. Over residues 272–283 the composition is skewed to acidic residues; that stretch reads SSDEAESDMDDL. A G-patch domain is found at 312-358; sequence TRGIGSKLMEKMGYIHGTGLGSDGRGIVTPVSAQILPQGRSLDACME. A compositionally biased stretch (polar residues) spans 478–495; that stretch reads VQMQSHKQELATLQAQER. Positions 478 to 513 are disordered; sequence VQMQSHKQELATLQAQERSLSKEQQTRKSKNKMFEF. The segment covering 496–513 has biased composition (basic and acidic residues); sequence SLSKEQQTRKSKNKMFEF.

It localises to the nucleus. In terms of biological role, transcription repressor. This chain is Zinc finger CCCH-type with G patch domain-containing protein, found in Drosophila melanogaster (Fruit fly).